The sequence spans 226 residues: Ras-related protein Rab11A (226 aa).

Residues 24-32 (GDSAVGKSQ), 43-49 (SLDSKST), 72-76 (DTAGQ), 130-133 (NKCD), and 160-162 (SAL) contribute to the GTP site. Positions 46–54 (SKSTIGVEF) match the Effector region motif. Residues cysteine 222 and cysteine 223 are each lipidated (S-geranylgeranyl cysteine). Cysteine 223 carries the post-translational modification Cysteine methyl ester. Residues 224–226 (QAS) constitute a propeptide, removed in mature form.

Belongs to the small GTPase superfamily. Rab family.

It is found in the cell membrane. The protein is Ras-related protein Rab11A (RAB11A) of Lotus japonicus (Lotus corniculatus var. japonicus).